The following is a 250-amino-acid chain: Urease accessory protein UreF (250 aa).

The disordered stretch occupies residues 1–21; the sequence is MDEADPGEAEAAQAEAAQDGA. The segment covering 9–21 has biased composition (low complexity); sequence AEAAQAEAAQDGA.

This sequence belongs to the UreF family. In terms of assembly, ureD, UreF and UreG form a complex that acts as a GTP-hydrolysis-dependent molecular chaperone, activating the urease apoprotein by helping to assemble the nickel containing metallocenter of UreC. The UreE protein probably delivers the nickel.

It is found in the cytoplasm. In terms of biological role, required for maturation of urease via the functional incorporation of the urease nickel metallocenter. The polypeptide is Urease accessory protein UreF (Methylobacterium sp. (strain 4-46)).